Consider the following 212-residue polypeptide: Thiamine-phosphate synthase (212 aa).

Residues 39 to 43 (QLREK) and Asn-71 each bind 4-amino-2-methyl-5-(diphosphooxymethyl)pyrimidine. Mg(2+) contacts are provided by Asp-72 and Asp-91. Residue Ser-110 coordinates 4-amino-2-methyl-5-(diphosphooxymethyl)pyrimidine. 2-[(2R,5Z)-2-carboxy-4-methylthiazol-5(2H)-ylidene]ethyl phosphate is bound at residue 137–139 (TPT). Position 140 (Lys-140) interacts with 4-amino-2-methyl-5-(diphosphooxymethyl)pyrimidine. Gly-168 provides a ligand contact to 2-[(2R,5Z)-2-carboxy-4-methylthiazol-5(2H)-ylidene]ethyl phosphate.

The protein belongs to the thiamine-phosphate synthase family. Mg(2+) serves as cofactor.

It catalyses the reaction 2-[(2R,5Z)-2-carboxy-4-methylthiazol-5(2H)-ylidene]ethyl phosphate + 4-amino-2-methyl-5-(diphosphooxymethyl)pyrimidine + 2 H(+) = thiamine phosphate + CO2 + diphosphate. The catalysed reaction is 2-(2-carboxy-4-methylthiazol-5-yl)ethyl phosphate + 4-amino-2-methyl-5-(diphosphooxymethyl)pyrimidine + 2 H(+) = thiamine phosphate + CO2 + diphosphate. It carries out the reaction 4-methyl-5-(2-phosphooxyethyl)-thiazole + 4-amino-2-methyl-5-(diphosphooxymethyl)pyrimidine + H(+) = thiamine phosphate + diphosphate. It functions in the pathway cofactor biosynthesis; thiamine diphosphate biosynthesis; thiamine phosphate from 4-amino-2-methyl-5-diphosphomethylpyrimidine and 4-methyl-5-(2-phosphoethyl)-thiazole: step 1/1. Condenses 4-methyl-5-(beta-hydroxyethyl)thiazole monophosphate (THZ-P) and 2-methyl-4-amino-5-hydroxymethyl pyrimidine pyrophosphate (HMP-PP) to form thiamine monophosphate (TMP). The polypeptide is Thiamine-phosphate synthase (Acidothermus cellulolyticus (strain ATCC 43068 / DSM 8971 / 11B)).